The primary structure comprises 223 residues: NAD(P)H-hydrate epimerase (223 aa).

In terms of domain architecture, YjeF N-terminal spans 9 to 209 (MQKIDTYTVN…DIGLLTPPDF (201 aa)). 57–61 (NNGAD) is a (6S)-NADPHX binding site. Residues N58 and D119 each contribute to the K(+) site. (6S)-NADPHX-binding positions include 123-129 (GTGLNNL) and D152. T155 contributes to the K(+) binding site.

It belongs to the NnrE/AIBP family. It depends on K(+) as a cofactor.

The catalysed reaction is (6R)-NADHX = (6S)-NADHX. It carries out the reaction (6R)-NADPHX = (6S)-NADPHX. Its function is as follows. Catalyzes the epimerization of the S- and R-forms of NAD(P)HX, a damaged form of NAD(P)H that is a result of enzymatic or heat-dependent hydration. This is a prerequisite for the S-specific NAD(P)H-hydrate dehydratase to allow the repair of both epimers of NAD(P)HX. This chain is NAD(P)H-hydrate epimerase, found in Leuconostoc gelidum subsp. gasicomitatum (strain DSM 15947 / CCUG 46042 / CECT 5767 / JCM 12535 / LMG 18811 / NBRC 113245 / TB1-10) (Leuconostoc gasicomitatum).